The sequence spans 508 residues: Cytochrome P450 monooxygenase lepD (508 aa).

A helical membrane pass occupies residues 22 to 42; the sequence is IAAAVAVVASIVIYLALSSFF. N-linked (GlcNAc...) asparagine glycosylation is found at Asn53 and Asn416. Residue Cys454 coordinates heme.

This sequence belongs to the cytochrome P450 family. It depends on heme as a cofactor.

The protein resides in the membrane. Cytochrome P450 monooxygenase; part of the gene cluster 23 that mediates the biosynthesis of a family of 2-pyridones known as leporins. The hybrid PKS-NRPS synthetase lepA and the enoyl reductase lepG are responsible for fusion of phenylalanine with a hexaketide and subsequent release of the stable tetramic acid precursor, pre-leporin C. Because lepA lacks a designated enoylreductase (ER) domain, the required activity is provided the enoyl reductase lepG. It is possible that the dehydrogenase lepF also participates in production of pre-leporin C. Cytochrome P450 monooxygenase lepH is then required for the ring expansion step to yield leporin C. Leporin C is then presumably further oxidized by the N-hydroxylase lepD to form leporin B. LepI may possess a function in biosynthesis upstream of lepA. Leporin B is further oxidized in the presence of ferric ion to give the leporin B trimer-iron chelate, but whether or not this reaction is catalyzed by an enzyme in the pathway or by ferric ion is not determined yet. This is Cytochrome P450 monooxygenase lepD from Aspergillus flavus (strain ATCC 200026 / FGSC A1120 / IAM 13836 / NRRL 3357 / JCM 12722 / SRRC 167).